The chain runs to 425 residues: Bifunctional phosphoribosylaminoimidazole carboxylase/phosphoribosylaminoimidazole succinocarboxamide synthetase (425 aa).

Ala2 bears the N-acetylalanine mark. The interval Ala2 to Leu260 is SAICAR synthetase domain. Position 22 is a phosphotyrosine (Tyr22). At Ser27 the chain carries Phosphoserine. N6-acetyllysine is present on Lys36. Ser107 carries the post-translational modification Phosphoserine. Thr238 is subject to Phosphothreonine. Lys247 is subject to N6-acetyllysine. The tract at residues Lys261–Cys266 is linker. The tract at residues Arg267–Leu425 is AIR carboxylase domain. Phosphoserine is present on Ser274. Ser332 provides a ligand contact to CO2.

In the N-terminal section; belongs to the SAICAR synthetase family. The protein in the C-terminal section; belongs to the AIR carboxylase family. Class II subfamily. In terms of assembly, homooctamer.

It carries out the reaction 5-amino-1-(5-phospho-D-ribosyl)imidazole-4-carboxylate + L-aspartate + ATP = (2S)-2-[5-amino-1-(5-phospho-beta-D-ribosyl)imidazole-4-carboxamido]succinate + ADP + phosphate + 2 H(+). The enzyme catalyses 5-amino-1-(5-phospho-D-ribosyl)imidazole-4-carboxylate + H(+) = 5-amino-1-(5-phospho-beta-D-ribosyl)imidazole + CO2. It participates in purine metabolism; IMP biosynthesis via de novo pathway; 5-amino-1-(5-phospho-D-ribosyl)imidazole-4-carboxamide from 5-amino-1-(5-phospho-D-ribosyl)imidazole-4-carboxylate: step 1/2. Its pathway is purine metabolism; IMP biosynthesis via de novo pathway; 5-amino-1-(5-phospho-D-ribosyl)imidazole-4-carboxylate from 5-amino-1-(5-phospho-D-ribosyl)imidazole (carboxylase route): step 1/1. In terms of biological role, bifunctional phosphoribosylaminoimidazole carboxylase and phosphoribosylaminoimidazole succinocarboxamide synthetase catalyzing two reactions of the de novo purine biosynthetic pathway. The sequence is that of Bifunctional phosphoribosylaminoimidazole carboxylase/phosphoribosylaminoimidazole succinocarboxamide synthetase from Homo sapiens (Human).